A 442-amino-acid chain; its full sequence is D-serine dehydratase (442 aa).

An N6-(pyridoxal phosphate)lysine modification is found at K118.

Belongs to the serine/threonine dehydratase family. DsdA subfamily. Monomer. Requires pyridoxal 5'-phosphate as cofactor.

It carries out the reaction D-serine = pyruvate + NH4(+). This is D-serine dehydratase from Shigella dysenteriae serotype 1 (strain Sd197).